The sequence spans 860 residues: Spindle and centriole-associated protein 1 (860 aa).

4 disordered regions span residues 127 to 150 (RKRT…GINQ), 172 to 201 (DDAG…HSNR), 230 to 250 (ATQS…AEDQ), and 294 to 332 (PLLA…TGSS). Composition is skewed to polar residues over residues 139–150 (PDSSQSHTGINQ), 190–200 (ELPNSLSQHSN), and 230–245 (ATQS…SSEL). Threonine 236 bears the Phosphothreonine mark. Serine 240 is modified (phosphoserine). Over residues 317-329 (SSSTASADRPSST) the composition is skewed to low complexity. Residues 383–439 (RYLKESEIQLRKEVETRQQLEQMLGDHRELIDALTAEILSLREENSTMQARLQQYMV) adopt a coiled-coil conformation. The disordered stretch occupies residues 623–645 (PAFVSLSQPPCSSLPSTQQPRNP). The segment covering 627–642 (SLSQPPCSSLPSTQQP) has biased composition (low complexity). The residue at position 648 (serine 648) is a Phosphoserine. The segment at 693-718 (ITSSGGEQGDGLREPRKQGSASEVST) is disordered. Residues 729–757 (SSMEERIAELNRQSMEARSKLLQLIEQQK) adopt a coiled-coil conformation. Serine 765, serine 766, serine 769, and serine 824 each carry phosphoserine. The segment at 792–860 (GMEASESSKC…GWFALSAHIP (69 aa)) is disordered. The segment covering 804–824 (VSPVSGNSSRRSSGAISNSCS) has biased composition (low complexity).

In terms of assembly, interacts with CEP120.

Its subcellular location is the cytoplasm. It is found in the cytoskeleton. It localises to the microtubule organizing center. The protein localises to the centrosome. The protein resides in the centriole. Its subcellular location is the spindle. In terms of biological role, regulator required for centriole duplication, for proper bipolar spindle formation and chromosome congression in mitosis. This chain is Spindle and centriole-associated protein 1 (Spice1), found in Mus musculus (Mouse).